A 204-amino-acid polypeptide reads, in one-letter code: Capsid protein (204 aa).

Residues 183 to 194 are compositionally biased toward polar residues; sequence EFSSESPVTSLK. Positions 183-204 are disordered; the sequence is EFSSESPVTSLKQLGRGLGTGR.

It belongs to the closteroviridae capsid protein family.

It is found in the virion. In terms of biological role, component that constitutes the body part of the virion. Also acts as a movement protein that is involved in local cell-cell movement via plamodesmata. At least five viral proteins, CP, CPm, p6, p64 and Hsp70h are essential for cell-cell movement. The chain is Capsid protein from Beet yellows virus (isolate Ukraine) (BYV).